Reading from the N-terminus, the 336-residue chain is HTH-type transcriptional regulator CdhR (336 aa).

Positions 213-311 (VQVIGEMERH…AASPSQDRAV (99 aa)) constitute an HTH araC/xylS-type domain. 2 consecutive DNA-binding regions (H-T-H motif) follow at residues 230–251 (LELA…RVHL) and 278–301 (VLQV…RARF). Residues 305-336 (PSQDRAVLPLKAPAATPPGAPAGHRTPRAERG) form a disordered region.

Its function is as follows. Induces the transcription of the PA5384-PA5388 operon in response to carnitine. This operon is involved in the degradation of L-carnitine, and allows P.aeruginosa to grow on L-carnitine as the sole source of carbon and nitrogen. In Pseudomonas aeruginosa (strain ATCC 15692 / DSM 22644 / CIP 104116 / JCM 14847 / LMG 12228 / 1C / PRS 101 / PAO1), this protein is HTH-type transcriptional regulator CdhR (cdhR).